The following is a 444-amino-acid chain: Trigger factor (444 aa).

The PPIase FKBP-type domain occupies 170–255 (NDIAVIDFVG…LKAIKQLEIT (86 aa)).

Belongs to the FKBP-type PPIase family. Tig subfamily.

The protein resides in the cytoplasm. The enzyme catalyses [protein]-peptidylproline (omega=180) = [protein]-peptidylproline (omega=0). Its function is as follows. Involved in protein export. Acts as a chaperone by maintaining the newly synthesized protein in an open conformation. Functions as a peptidyl-prolyl cis-trans isomerase. This Mycoplasma pneumoniae (strain ATCC 29342 / M129 / Subtype 1) (Mycoplasmoides pneumoniae) protein is Trigger factor (tig).